Consider the following 196-residue polypeptide: PRADC1-like protein (196 aa).

A signal peptide spans methionine 1–alanine 18. The 99-residue stretch at isoleucine 73 to histidine 171 folds into the PA domain. Residue asparagine 179 is glycosylated (N-linked (GlcNAc...) asparagine).

The protein resides in the secreted. In terms of biological role, may be involved in iversification of muscle cell fates. This is PRADC1-like protein from Drosophila melanogaster (Fruit fly).